A 193-amino-acid chain; its full sequence is Acyl carrier protein phosphodiesterase (193 aa).

The protein belongs to the AcpH family.

The enzyme catalyses holo-[ACP] + H2O = apo-[ACP] + (R)-4'-phosphopantetheine + H(+). Its function is as follows. Converts holo-ACP to apo-ACP by hydrolytic cleavage of the phosphopantetheine prosthetic group from ACP. The polypeptide is Acyl carrier protein phosphodiesterase (Salmonella paratyphi A (strain ATCC 9150 / SARB42)).